A 164-amino-acid polypeptide reads, in one-letter code: Putative F-box protein At1g59675 (164 aa).

The F-box domain maps to 9-56 (SQSDHVPLDLTIEILSRLPAKSVGRFRSVSKLWSANTTSQNFINSFAT).

The sequence is that of Putative F-box protein At1g59675 from Arabidopsis thaliana (Mouse-ear cress).